A 598-amino-acid polypeptide reads, in one-letter code: Elongation factor 4 (598 aa).

The region spanning 2–184 is the tr-type G domain; sequence QHIRNFSIIA…AIVARVPAPK (183 aa). Residues 14 to 19 and 131 to 134 contribute to the GTP site; these read DHGKST and NKID.

It belongs to the TRAFAC class translation factor GTPase superfamily. Classic translation factor GTPase family. LepA subfamily.

The protein localises to the cell inner membrane. It carries out the reaction GTP + H2O = GDP + phosphate + H(+). Functionally, required for accurate and efficient protein synthesis under certain stress conditions. May act as a fidelity factor of the translation reaction, by catalyzing a one-codon backward translocation of tRNAs on improperly translocated ribosomes. Back-translocation proceeds from a post-translocation (POST) complex to a pre-translocation (PRE) complex, thus giving elongation factor G a second chance to translocate the tRNAs correctly. Binds to ribosomes in a GTP-dependent manner. In Azoarcus sp. (strain BH72), this protein is Elongation factor 4.